We begin with the raw amino-acid sequence, 95 residues long: Opiscorpine-1 (95 aa).

Residues methionine 1–cysteine 19 form the signal peptide. Residues glutamate 55–tyrosine 95 form the BetaSPN-type CS-alpha/beta domain. 3 disulfides stabilise this stretch: cysteine 58-cysteine 82, cysteine 68-cysteine 87, and cysteine 72-cysteine 89.

The protein belongs to the long chain scorpion toxin family. Class 3 subfamily. As to expression, expressed by the venom gland.

Its subcellular location is the secreted. The short synthetic peptide (20-54) has antimicrobial activity against the yeasts F.culmorum (IC(50)=8.8 uM) and F.oxysporum (IC(50)=10 uM), and the Gram-negative bacteria E.coli. This chain is Opiscorpine-1, found in Opistophthalmus carinatus (African yellow leg scorpion).